A 488-amino-acid chain; its full sequence is N-succinylglutamate 5-semialdehyde dehydrogenase (488 aa).

221–226 (GSSRTG) provides a ligand contact to NAD(+). Catalysis depends on residues E244 and C278.

The protein belongs to the aldehyde dehydrogenase family. AstD subfamily.

It catalyses the reaction N-succinyl-L-glutamate 5-semialdehyde + NAD(+) + H2O = N-succinyl-L-glutamate + NADH + 2 H(+). It functions in the pathway amino-acid degradation; L-arginine degradation via AST pathway; L-glutamate and succinate from L-arginine: step 4/5. Functionally, catalyzes the NAD-dependent reduction of succinylglutamate semialdehyde into succinylglutamate. This Pseudomonas fluorescens (strain Pf0-1) protein is N-succinylglutamate 5-semialdehyde dehydrogenase.